The sequence spans 892 residues: Leucine--tRNA ligase (892 aa).

A 'HIGH' region motif is present at residues Pro42–His52. A 'KMSKS' region motif is present at residues Thr640 to Ser644. Lys643 is an ATP binding site.

It belongs to the class-I aminoacyl-tRNA synthetase family.

The protein localises to the cytoplasm. The enzyme catalyses tRNA(Leu) + L-leucine + ATP = L-leucyl-tRNA(Leu) + AMP + diphosphate. The chain is Leucine--tRNA ligase from Albidiferax ferrireducens (strain ATCC BAA-621 / DSM 15236 / T118) (Rhodoferax ferrireducens).